The sequence spans 1683 residues: A-kinase anchor protein SPHKAP (1683 aa).

Composition is skewed to polar residues over residues 1–14 and 289–301; these read MDVN…SNVE and AENT…NPSA. 3 disordered regions span residues 1–30, 275–320, and 582–601; these read MDVN…ITSS, RMPS…ATNY, and LLPT…LVTE. Positions 910–927 are PKA-RII subunit binding domain; it reads FAEELAETVVSMATEIAA. The interval 960-983 is disordered; it reads LKRKKENSGTGSTVRKHKPPRLSE. Phosphoserine is present on residues S1006, S1066, S1088, S1101, S1102, S1105, S1240, and S1269. Disordered stretches follow at residues 1359-1387 and 1415-1518; these read VTEG…PTRE and ETDQ…DTSS. Positions 1362–1371 are enriched in polar residues; that stretch reads GNCSPVSSPS. Positions 1469-1490 are enriched in basic and acidic residues; it reads LETREELEVDVLKEDITLDESR. The segment covering 1492 to 1504 has biased composition (low complexity); the sequence is PPSSSEESTGSWS.

It belongs to the AKAP110 family. In terms of assembly, interacts (via the PKA-RII subunit binding domain) with the RI subunit of PKA. Interacts with SPHK1; the interaction greatly reduces SPHK1 activity. As to expression, abundant in heart ventricle (at protein level).

The protein resides in the cytoplasm. Functionally, anchoring protein that binds preferentially to the type I regulatory subunit of c-AMP-dependent protein kinase (PKA type I) and targets it to distinct subcellular compartments. May act as a converging factor linking cAMP and sphingosine signaling pathways. Plays a regulatory role in the modulation of SPHK1. This chain is A-kinase anchor protein SPHKAP (Sphkap), found in Rattus norvegicus (Rat).